Here is a 410-residue protein sequence, read N- to C-terminus: Proteasomal ubiquitin receptor ADRM1 (410 aa).

The Pru domain occupies 17-130 (SSSKYLVEFR…RKVNEYLNNP (114 aa)). A Phosphoserine modification is found at serine 18. The segment covering 191-257 (GSGGPATSSS…PAAQTPSLPA (67 aa)) has biased composition (low complexity). Disordered stretches follow at residues 191-264 (GSGG…SSTQ) and 381-410 (FAKAMEGSDSKTDDGDSKDKKDDDEDMSLD). Residues 281–395 (PAMPTEGSGV…EGSDSKTDDG (115 aa)) form the DEUBAD domain. A compositionally biased stretch (basic and acidic residues) spans 381–401 (FAKAMEGSDSKTDDGDSKDKK).

It belongs to the ADRM1 family. As to quaternary structure, component of the 19S proteasome regulatory particle complex. The 26S proteasome consists of a 20S core particle (CP) and two 19S regulatory subunits (RP).

The protein resides in the cytoplasm. It localises to the nucleus. Functionally, component of the 26S proteasome, a multiprotein complex involved in the ATP-dependent degradation of ubiquitinated proteins. This complex plays a key role in the maintenance of protein homeostasis by removing misfolded or damaged proteins, which could impair cellular functions, and by removing proteins whose functions are no longer required. Therefore, the proteasome participates in numerous cellular processes, including cell cycle progression, apoptosis, or DNA damage repair. Within the complex, functions as a proteasomal ubiquitin receptor. This chain is Proteasomal ubiquitin receptor ADRM1 (adrm1b), found in Danio rerio (Zebrafish).